A 680-amino-acid chain; its full sequence is Fermitin family homolog 2 (680 aa).

The interval 40-81 is interaction with membranes containing phosphatidylinositol phosphate; it reads HIGGVMLKLVEKLDVKKDWSDHALWWEKKRTWLLKTHWTLDK. The disordered stretch occupies residues 141-165; the sequence is LKKPRDPTKKKKKKLDDQSEDEALE. Residues Ser-159, Ser-181, Ser-339, and Ser-351 each carry the phosphoserine modification. In terms of domain architecture, FERM spans 189–661; that stretch reads MTPTYDAHDG…GYIFLSTRAK (473 aa). The PH domain maps to 380 to 476; that stretch reads KVFKPKKLTL…WMAACRLASK (97 aa). Lys-383 contacts a 1,2-diacyl-sn-glycero-3-phospho-(1D-myo-inositol-3,4,5-trisphosphate). Phosphoserine is present on Ser-666.

It belongs to the kindlin family. Interacts with ILK. Interacts with FBLIM1. Interacts with ITGB1 and ITGB3. Interacts with active, unphosphorylated CTNNB1. Identified in a complex with CTNNB1 and TCF7L2/TCF4. Interacts with ITGB1; the interaction is inhibited in presence of ITGB1BP1. In terms of tissue distribution, ubiquitous. Found in numerous tumor tissues.

It is found in the cytoplasm. The protein resides in the cell cortex. The protein localises to the cytoskeleton. It localises to the stress fiber. Its subcellular location is the cell junction. It is found in the focal adhesion. The protein resides in the membrane. The protein localises to the cell projection. It localises to the lamellipodium membrane. Its subcellular location is the nucleus. It is found in the myofibril. The protein resides in the sarcomere. The protein localises to the i band. It localises to the cell surface. Scaffolding protein that enhances integrin activation mediated by TLN1 and/or TLN2, but activates integrins only weakly by itself. Binds to membranes enriched in phosphoinositides. Enhances integrin-mediated cell adhesion onto the extracellular matrix and cell spreading; this requires both its ability to interact with integrins and with phospholipid membranes. Required for the assembly of focal adhesions. Participates in the connection between extracellular matrix adhesion sites and the actin cytoskeleton and also in the orchestration of actin assembly and cell shape modulation. Recruits FBLIM1 to focal adhesions. Plays a role in the TGFB1 and integrin signaling pathways. Stabilizes active CTNNB1 and plays a role in the regulation of transcription mediated by CTNNB1 and TCF7L2/TCF4 and in Wnt signaling. The sequence is that of Fermitin family homolog 2 (FERMT2) from Homo sapiens (Human).